The primary structure comprises 257 residues: Nickel import system ATP-binding protein NikD (257 aa).

Residues 4–245 form the ABC transporter domain; sequence IDIQNLTIKN…HLHPYTERLI (242 aa). Residue 37 to 44 coordinates ATP; it reads GESGAGKS.

This sequence belongs to the ABC transporter superfamily. The complex is composed of two ATP-binding proteins (NikD and NikE), two transmembrane proteins (NikB and NikC) and a solute-binding protein (NikA).

The protein localises to the cell membrane. The enzyme catalyses Ni(2+)(out) + ATP + H2O = Ni(2+)(in) + ADP + phosphate + H(+). In terms of biological role, part of the ABC transporter complex NikABCDE (Opp2) involved in nickel import. Probably responsible for energy coupling to the transport system. The sequence is that of Nickel import system ATP-binding protein NikD from Staphylococcus aureus (strain MSSA476).